Here is an 874-residue protein sequence, read N- to C-terminus: Dynein regulatory complex subunit 7 (874 aa).

Residues 1–20 (MEVLREKVEEEEEAEREEAA) are disordered. Coiled coils occupy residues 1–67 (MEVL…SAEL) and 257–297 (RFEQ…DALH). The segment covering 386-400 (TEEDDSGINDEDDVE) has biased composition (acidic residues). The disordered stretch occupies residues 386-410 (TEEDDSGINDEDDVENLGKEDEDKS). Basic and acidic residues predominate over residues 401-410 (NLGKEDEDKS).

The protein belongs to the DRC7 family. As to quaternary structure, component of the nexin-dynein regulatory complex (N-DRC). Interacts with TCTE1/DRC5. Interacts with DRC3 and GAS8/DRC4. In terms of tissue distribution, expressed in the testis.

It localises to the cell projection. The protein resides in the cilium. The protein localises to the flagellum. It is found in the cytoplasm. Its subcellular location is the cytoskeleton. It localises to the cilium axoneme. The protein resides in the flagellum axoneme. Its function is as follows. Component of the nexin-dynein regulatory complex (N-DRC) a key regulator of ciliary/flagellar motility which maintains the alignment and integrity of the distal axoneme and regulates microtubule sliding in motile axonemes. Involved in the regulation of flagellar motility. Essential for male fertility, sperm head morphogenesis and sperm flagellum formation. The protein is Dynein regulatory complex subunit 7 (DRC7) of Pan troglodytes (Chimpanzee).